Here is a 419-residue protein sequence, read N- to C-terminus: Subtilisin-like protease 2 (419 aa).

A signal peptide spans 1–16; the sequence is MQLLNFGLLLLPFVAG. Residues 17–122 constitute a propeptide that is removed on maturation; it reads DLAPQPEPLL…VHPDQHVYLA (106 aa). An Inhibitor I9 domain is found at 36 to 122; that stretch reads QYIVTLKEGL…VHPDQHVYLA (87 aa). The region spanning 131-419 is the Peptidase S8 domain; it reads RWGLGYMSSK…IQERKFKLPK (289 aa). Active-site charge relay system residues include Asp-169 and His-201. Asn-248, Asn-261, and Asn-348 each carry an N-linked (GlcNAc...) asparagine glycan. Ser-357 acts as the Charge relay system in catalysis. Asn-388 carries an N-linked (GlcNAc...) asparagine glycan.

The protein belongs to the peptidase S8 family.

It is found in the secreted. Functionally, secreted subtilisin-like serine protease with keratinolytic activity that contributes to pathogenicity. The polypeptide is Subtilisin-like protease 2 (SUB2) (Arthroderma benhamiae (Trichophyton mentagrophytes)).